The sequence spans 197 residues: dTTP/UTP pyrophosphatase (197 aa).

The active-site Proton acceptor is Asp69.

Belongs to the Maf family. YhdE subfamily. It depends on a divalent metal cation as a cofactor.

Its subcellular location is the cytoplasm. The enzyme catalyses dTTP + H2O = dTMP + diphosphate + H(+). It carries out the reaction UTP + H2O = UMP + diphosphate + H(+). Functionally, nucleoside triphosphate pyrophosphatase that hydrolyzes dTTP and UTP. May have a dual role in cell division arrest and in preventing the incorporation of modified nucleotides into cellular nucleic acids. The sequence is that of dTTP/UTP pyrophosphatase from Lachnoclostridium phytofermentans (strain ATCC 700394 / DSM 18823 / ISDg) (Clostridium phytofermentans).